The sequence spans 142 residues: Neuritin (142 aa).

The first 27 residues, 1–27 (MGLKLNGRYISLILAVQIAYLVQAVRA), serve as a signal peptide directing secretion. G116 carries the GPI-anchor amidated glycine lipid modification. The propeptide at 117-142 (AAGSLLPAFPVLLVSLSAALATWLSF) is removed in mature form.

This sequence belongs to the neuritin family. As to quaternary structure, component of the outer core of AMPAR complex. AMPAR complex consists of an inner core made of 4 pore-forming GluA/GRIA proteins (GRIA1, GRIA2, GRIA3 and GRIA4) and 4 major auxiliary subunits arranged in a twofold symmetry. One of the two pairs of distinct binding sites is occupied either by CNIH2, CNIH3 or CACNG2, CACNG3. The other harbors CACNG2, CACNG3, CACNG4, CACNG8 or GSG1L. This inner core of AMPAR complex is complemented by outer core constituents binding directly to the GluA/GRIA proteins at sites distinct from the interaction sites of the inner core constituents. Outer core constituents include at least PRRT1, PRRT2, CKAMP44/SHISA9, FRRS1L and NRN1. The proteins of the inner and outer core serve as a platform for other, more peripherally associated AMPAR constituents. Alone or in combination, these auxiliary subunits control the gating and pharmacology of the AMPAR complex and profoundly impact their biogenesis and protein processing.

It is found in the cell membrane. It localises to the synapse. In terms of biological role, promotes neurite outgrowth and especially branching of neuritic processes in primary hippocampal and cortical cells. The chain is Neuritin (NRN1) from Homo sapiens (Human).